The chain runs to 456 residues: Cysteine--tRNA ligase (456 aa).

Cys28 lines the Zn(2+) pocket. Positions 30-40 match the 'HIGH' region motif; the sequence is ITVYDHCHLGH. 3 residues coordinate Zn(2+): Cys209, His234, and Glu238. The 'KMSKS' region motif lies at 266–270; that stretch reads KMAKS. Lys269 contacts ATP.

It belongs to the class-I aminoacyl-tRNA synthetase family. As to quaternary structure, monomer. The cofactor is Zn(2+).

It is found in the cytoplasm. The catalysed reaction is tRNA(Cys) + L-cysteine + ATP = L-cysteinyl-tRNA(Cys) + AMP + diphosphate. This Legionella pneumophila (strain Paris) protein is Cysteine--tRNA ligase.